Here is a 66-residue protein sequence, read N- to C-terminus: Large ribosomal subunit protein bL33c (66 aa).

This sequence belongs to the bacterial ribosomal protein bL33 family.

The protein resides in the plastid. It localises to the chloroplast. This Vitis vinifera (Grape) protein is Large ribosomal subunit protein bL33c.